We begin with the raw amino-acid sequence, 312 residues long: Methionyl-tRNA formyltransferase (312 aa).

110–113 is a (6S)-5,6,7,8-tetrahydrofolate binding site; the sequence is SLLP.

Belongs to the Fmt family.

The catalysed reaction is L-methionyl-tRNA(fMet) + (6R)-10-formyltetrahydrofolate = N-formyl-L-methionyl-tRNA(fMet) + (6S)-5,6,7,8-tetrahydrofolate + H(+). Its function is as follows. Attaches a formyl group to the free amino group of methionyl-tRNA(fMet). The formyl group appears to play a dual role in the initiator identity of N-formylmethionyl-tRNA by promoting its recognition by IF2 and preventing the misappropriation of this tRNA by the elongation apparatus. The sequence is that of Methionyl-tRNA formyltransferase from Mycobacterium ulcerans (strain Agy99).